The chain runs to 212 residues: Orotate phosphoribosyltransferase (212 aa).

5-phospho-alpha-D-ribose 1-diphosphate contacts are provided by residues R97, K101, H103, and 123-131 (EDLISTGGS). S127 contributes to the orotate binding site.

Belongs to the purine/pyrimidine phosphoribosyltransferase family. PyrE subfamily. As to quaternary structure, homodimer. It depends on Mg(2+) as a cofactor.

It catalyses the reaction orotidine 5'-phosphate + diphosphate = orotate + 5-phospho-alpha-D-ribose 1-diphosphate. It participates in pyrimidine metabolism; UMP biosynthesis via de novo pathway; UMP from orotate: step 1/2. Catalyzes the transfer of a ribosyl phosphate group from 5-phosphoribose 1-diphosphate to orotate, leading to the formation of orotidine monophosphate (OMP). This chain is Orotate phosphoribosyltransferase, found in Bacteroides thetaiotaomicron (strain ATCC 29148 / DSM 2079 / JCM 5827 / CCUG 10774 / NCTC 10582 / VPI-5482 / E50).